We begin with the raw amino-acid sequence, 156 residues long: NAD(P)H-quinone oxidoreductase subunit N (156 aa).

Belongs to the complex I NdhN subunit family. In terms of assembly, NDH-1 can be composed of about 15 different subunits; different subcomplexes with different compositions have been identified which probably have different functions.

It is found in the cellular thylakoid membrane. It catalyses the reaction a plastoquinone + NADH + (n+1) H(+)(in) = a plastoquinol + NAD(+) + n H(+)(out). The catalysed reaction is a plastoquinone + NADPH + (n+1) H(+)(in) = a plastoquinol + NADP(+) + n H(+)(out). In terms of biological role, NDH-1 shuttles electrons from an unknown electron donor, via FMN and iron-sulfur (Fe-S) centers, to quinones in the respiratory and/or the photosynthetic chain. The immediate electron acceptor for the enzyme in this species is believed to be plastoquinone. Couples the redox reaction to proton translocation, and thus conserves the redox energy in a proton gradient. Cyanobacterial NDH-1 also plays a role in inorganic carbon-concentration. In Prochlorococcus marinus (strain MIT 9515), this protein is NAD(P)H-quinone oxidoreductase subunit N.